The primary structure comprises 270 residues: MSDIESLNGGDLFAEPSDFYKPPPEPHFATYTRDDVPESSTSQQKDIKLRLVGSSPLWGHLLWNAGIYTAKHMDSHPEEVQDKLVLELGAAGALPTIIAGLLGARKVVSTDYPDADLISNIQYNVDHNIYGGEELFKDEEKRSKQMANRKVVVEGYIWGNDYEPILKHLPQDQQKFDLIILSDLVFNHTEHAKLFKTTKDLLRENGKALVVFSPHRPWLLENDLAFFKDCEEFGLKSDLIELTHWKPMFDEDEETVEIRSSIYAYYLSHI.

The disordered stretch occupies residues 1–45 (MSDIESLNGGDLFAEPSDFYKPPPEPHFATYTRDDVPESSTSQQK). Residues Trp63, 89 to 91 (GAA), Asp111, Trp158, and Ser182 contribute to the S-adenosyl-L-methionine site.

Belongs to the class I-like SAM-binding methyltransferase superfamily. EFM7 family.

It localises to the cytoplasm. Functionally, S-adenosyl-L-methionine-dependent protein methyltransferase that trimethylates the N-terminal glycine 'Gly-2' of elongation factor 1-alpha, before also catalyzing the mono- and dimethylation of 'Lys-3'. The polypeptide is Protein N-terminal and lysine N-methyltransferase EFM7 (Kluyveromyces lactis (strain ATCC 8585 / CBS 2359 / DSM 70799 / NBRC 1267 / NRRL Y-1140 / WM37) (Yeast)).